Here is a 246-residue protein sequence, read N- to C-terminus: ATP synthase subunit a, chloroplastic (246 aa).

5 helical membrane-spanning segments follow: residues 33-53, 99-119, 133-153, 201-221, and 222-242; these read VHGQVLLVSWFVLAVIIGFGL, TIFLFVFVSNWSGALVPWALI, INTTVALALLTSIAYFYAGIN, GVLVALVPLVIPIPLMLLGLF, and TSAIQALVFSTLAGAYIGESL.

The protein belongs to the ATPase A chain family. As to quaternary structure, F-type ATPases have 2 components, CF(1) - the catalytic core - and CF(0) - the membrane proton channel. CF(1) has five subunits: alpha(3), beta(3), gamma(1), delta(1), epsilon(1). CF(0) has four main subunits: a, b, b' and c.

It is found in the plastid. It localises to the chloroplast thylakoid membrane. Key component of the proton channel; it plays a direct role in the translocation of protons across the membrane. The polypeptide is ATP synthase subunit a, chloroplastic (Oltmannsiellopsis viridis (Marine flagellate)).